A 172-amino-acid polypeptide reads, in one-letter code: uncharacterized protein (172 aa).

4 helical membrane passes run 20 to 40, 48 to 68, 76 to 96, and 146 to 166; these read LVLI…EYIF, CVYE…ALII, LILI…HSFV, and MTEY…LILF.

Its subcellular location is the cell membrane. This is an uncharacterized protein from Rickettsia prowazekii (strain Madrid E).